A 610-amino-acid polypeptide reads, in one-letter code: MMDGASPVDRDVSPVGLPKKRIKQNHDQVFLHNLPDAPRYTKSYMHNAEIYKCFPTKSNYILSVSYDGYVKFWHKTPNGVEYIKEFHAHNAMLLSAELSQDERLFITGADDKSLKVFDVESIDLVNIIDLEFLPKAICCFNSPSLKTSLIAVSSAESPLIFFFESGGDGEVLYTVKKHTAPVHCLRYLSTLDCFLSIDIGGMVEYWSPEEPFQKPDTAELFNMKSQTDLYIFKKQKSVPTSLEVSHFENFWSTISYPDCKVRVFDTKSGRAILELDENPSNAAKKVEALFEKEDTESSYYMSHVELGRRIAIERDIEKHGLTVGTTAIFDESEKYLLYGSIVGIKVVSIDNGTVVRIYGKDEAVRFTRLSLYQQAPKKSNLPSLDVIASNNPLVEESFQKDPTLFATAWKKQRFYLFSNMSTKFTLSDRDVYNEQVLPVTNNEGRQENGNILLGKAAIIHTTQGDISIKLYPEEAPKAVQNFTTHAENGYYDNTIFHRIIKNFMIQGGDPLGDGTGGESIWKKDFEDEISPNLKHDRPFTVSMANSGPNTNGSQFFITTDLTPWLDGKHTIFARAYAGLDVVHRIEQGETDKYDRPLEPTKIINISIVYT.

Serine 13 carries the post-translational modification Phosphoserine. WD repeat units follow at residues 45 to 83 (MHNAEIYKCFPTKSNYILSVSYDGYVKFWHKTPNGVEYI), 88 to 127 (AHNAMLLSAELSQDERLFITGADDKSLKVFDVESIDLVNI), and 177 to 216 (KHTAPVHCLRYLSTLDCFLSIDIGGMVEYWSPEEPFQKPD). Residues 453-607 (LGKAAIIHTT…EPTKIINISI (155 aa)) form the PPIase cyclophilin-type domain.

This sequence belongs to the cyclophilin-type PPIase family.

The protein resides in the nucleus. It carries out the reaction [protein]-peptidylproline (omega=180) = [protein]-peptidylproline (omega=0). Its function is as follows. PPIases accelerate the folding of proteins. It catalyzes the cis-trans isomerization of proline imidic peptide bonds in oligopeptides. In Schizosaccharomyces pombe (strain 972 / ATCC 24843) (Fission yeast), this protein is Peptidyl-prolyl cis-trans isomerase 9 (cyp9).